We begin with the raw amino-acid sequence, 431 residues long: Probable 3-hydroxy-3-methylglutaryl-coenzyme A reductase (431 aa).

Active-site charge relay system residues include E85 and D278. Residue H375 is the Proton donor of the active site.

The protein belongs to the HMG-CoA reductase family.

The catalysed reaction is (R)-mevalonate + 2 NAD(+) + CoA = (3S)-3-hydroxy-3-methylglutaryl-CoA + 2 NADH + 2 H(+). It participates in metabolic intermediate metabolism; (R)-mevalonate degradation; (S)-3-hydroxy-3-methylglutaryl-CoA from (R)-mevalonate: step 1/1. Converts HMG-CoA to mevalonate. The polypeptide is Probable 3-hydroxy-3-methylglutaryl-coenzyme A reductase (Borreliella burgdorferi (strain ATCC 35210 / DSM 4680 / CIP 102532 / B31) (Borrelia burgdorferi)).